Here is an 866-residue protein sequence, read N- to C-terminus: N-alpha-acetyltransferase 15, NatA auxiliary subunit (866 aa).

4 TPR repeats span residues 46–79 (GETLAMKGLTLNCLGKKEEAYELVRRGLRNDLKS), 80–113 (HVCWHVYGLLQRSDKKYDEAIKCYRNALKWDKDN), 148–184 (RASWIGYAIAYHLLEDYEMAAKILEEFRKTQQTSPDK), and 224–257 (LAVEETKGELLLQLCRLEDAADVYRGLQERNPEN). K262 carries the N6-acetyllysine modification. Position 302 is a phosphoserine (S302). TPR repeat units follow at residues 374-407 (LWVQYYLAQHYDKIGQPSIALEYINTAIESTPTL), 409-441 (ELFLVKAKIYKHAGNIKEAARWMDEAQALDTAD), and 485-518 (MWFQTECAQAYKAMNKFGEALKKCHEIERHFIEI). Residues 500-866 (KFGEALKKCH…AEAEELANEI (367 aa)) are interaction with HYPK. Phosphoserine occurs at positions 537 and 588. The segment covering 579 to 594 (EHEADTANMSDKELKK) has biased composition (basic and acidic residues). Positions 579–642 (EHEADTANMS…EEIGGPKEEL (64 aa)) are disordered. Over residues 595–604 (LRNKQRRAQK) the composition is skewed to basic residues. Over residues 606–621 (AQIEEEKKNAEKEKQQ) the composition is skewed to basic and acidic residues. The Bipartite nuclear localization signal signature appears at 612-629 (KKNAEKEKQQRNQKKKKD). One copy of the TPR 8 repeat lies at 672–705 (IETHLFAFEIYFRKEKFLLMLQSVKRAFAIDSSH). 2 positions are modified to N6-acetyllysine: K735 and K756. 2 positions are modified to phosphoserine: S855 and S856.

Component of the N-terminal acetyltransferase A complex (also called the NatA complex) composed of NAA10 and NAA15. Within the complex interacts with NAA10. Component of the N-terminal acetyltransferase A (NatA)/HYPK complex at least composed of NAA10, NAA15 and HYPK, which has N-terminal acetyltransferase activity. In complex with NAA10, interacts with HYPK. Component of the N-terminal acetyltransferase E (NatE) complex at least composed of NAA10, NAA15 and NAA50. Within the complex interacts with NAA10; the interaction is required for binding to NAA50. Interacts with NAAT50. The interaction of the NatA complex with NAA50 reduces the acetylation activity of the NatA complex. Component of the N-terminal acetyltransferase E (NatE)/HYPK complex at least composed of NAA10, NAA15, NAA50 and HYPK. In complex with NAA10 interacts with HYPK; the interaction with HYPK reduces the capacity of the NatA complex to interact with NAA50. Interacts with NAA11. Interacts with XRCC6 and XRCC5. Post-translationally, cleaved by caspases during apoptosis, resulting in a stable 35 kDa fragment. As to expression, expressed at high levels in testis and in ocular endothelial cells. Also found in brain (corpus callosum), heart, colon, bone marrow and at lower levels in most adult tissues, including thyroid, liver, pancreas, mammary and salivary glands, lung, ovary, urogenital system and upper gastrointestinal tract. Overexpressed in gastric cancer, in papillary thyroid carcinomas and in a Burkitt lymphoma cell line (Daudi). Specifically suppressed in abnormal proliferating blood vessels in eyes of patients with proliferative diabetic retinopathy.

The protein localises to the cytoplasm. It localises to the nucleus. Functionally, auxillary subunit of N-terminal acetyltransferase complexes which display alpha (N-terminal) acetyltransferase (NAT) activity. The NAT activity may be important for vascular, hematopoietic and neuronal growth and development. Required to control retinal neovascularization in adult ocular endothelial cells. In complex with XRCC6 and XRCC5 (Ku80), up-regulates transcription from the osteocalcin promoter. The protein is N-alpha-acetyltransferase 15, NatA auxiliary subunit (NAA15) of Homo sapiens (Human).